We begin with the raw amino-acid sequence, 687 residues long: Complement C1s subcomponent (687 aa).

Residues 1–15 (MWCIVLLSLLAWVDA) form the signal peptide. Positions 16–130 (EPTMYGEILS…TGFAAYYVAV (115 aa)) constitute a CUB 1 domain. Ca(2+) is bound by residues E60, D68, D113, D131, V132, and E134. C65 and C83 are oxidised to a cystine. An EGF-like; calcium-binding domain is found at 131–172 (DVNECTDFADSPCSHFCNNYIGGYFCSCPPEYFLHEDKKNCG). 3 disulfide bridges follow: C135/C147, C143/C156, and C158/C171. The Ca(2+) site is built by N149, Y150, and G153. At N149 the chain carries (3R)-3-hydroxyasparagine. N-linked (GlcNAc...) asparagine glycosylation is present at N174. Cystine bridges form between C175/C202, C234/C251, C294/C341, C321/C354, C359/C403, C386/C421, C425/C548, C594/C617, and C626/C658. In terms of domain architecture, CUB 2 spans 175–290 (CSGDVFTTLI…KGWKFRYHGD (116 aa)). 2 consecutive Sushi domains span residues 292-356 (IPCP…RCQP) and 357-423 (VDCG…KCVP). An N-linked (GlcNAc...) asparagine glycan is attached at N406. The Peptidase S1 domain occupies 438 to 679 (IFGGIITKIE…YIDWIRETMQ (242 aa)). Catalysis depends on charge relay system residues H475 and D528. The active-site Charge relay system is the S630.

This sequence belongs to the peptidase S1 family. C1 is a calcium-dependent trimolecular complex of C1q, C1r and C1s in the molar ration of 1:2:2. Activated C1s is an disulfide-linked heterodimer of a heavy chain and a light chain. Post-translationally, the iron and 2-oxoglutarate dependent 3-hydroxylation of aspartate and asparagine is (R) stereospecific within EGF domains.

The catalysed reaction is Cleavage of Arg-|-Ala bond in complement component C4 to form C4a and C4b, and Lys(or Arg)-|-Lys bond in complement component C2 to form C2a and C2b: the 'classical' pathway C3 convertase.. With respect to regulation, inhibited by SERPING1. Functionally, C1s B chain is a serine protease that combines with C1q and C1r to form C1, the first component of the classical pathway of the complement system. C1r activates C1s so that it can, in turn, activate C2 and C4. Also cleaves IGFBP5 and thereby inhibits the trophic effects of IGF1. The sequence is that of Complement C1s subcomponent from Sus scrofa (Pig).